The following is a 400-amino-acid chain: Cytoplasmic tRNA 2-thiolation protein 2 (400 aa).

The protein belongs to the CTU2/NCS2 family.

It is found in the cytoplasm. It functions in the pathway tRNA modification; 5-methoxycarbonylmethyl-2-thiouridine-tRNA biosynthesis. Its function is as follows. Plays a central role in 2-thiolation of mcm(5)S(2)U at tRNA wobble positions of tRNA(Lys), tRNA(Glu) and tRNA(Gln). May act by forming a heterodimer with NCS6/CTU1 that ligates sulfur from thiocarboxylated URM1 onto the uridine of tRNAs at wobble position. This Drosophila virilis (Fruit fly) protein is Cytoplasmic tRNA 2-thiolation protein 2.